A 170-amino-acid polypeptide reads, in one-letter code: Ureidoglycolate lyase (170 aa).

This sequence belongs to the ureidoglycolate lyase family. In terms of assembly, homodimer. Ni(2+) is required as a cofactor.

It catalyses the reaction (S)-ureidoglycolate = urea + glyoxylate. Its pathway is nitrogen metabolism; (S)-allantoin degradation. Catalyzes the catabolism of the allantoin degradation intermediate (S)-ureidoglycolate, generating urea and glyoxylate. Involved in the utilization of allantoin as nitrogen source. In Pseudomonas savastanoi pv. phaseolicola (strain 1448A / Race 6) (Pseudomonas syringae pv. phaseolicola (strain 1448A / Race 6)), this protein is Ureidoglycolate lyase.